A 260-amino-acid chain; its full sequence is MSLNTTFTKEDGTEVVIPFNGSQNGHPENEEPEVEEAAEPSSSVETLCGATRGDIIVMKHTTKALTELIERLLHSDEFEVRRCSNGQIISQGRCNGTTPGNGIGGGGASSEELEKALKDRDAARAEADKLHANYATLFASFNTVREAANDIRGEYEDARDKLKLAAAEVDEWQAKFLAVKDNANSELERASVEYDDLLRSHDENTKGLRLRVKRQEIELSSKNDEIKVLTNRVSELSQICDQLLNDVDVSDGMSVISTDA.

The disordered stretch occupies residues 1–43; the sequence is MSLNTTFTKEDGTEVVIPFNGSQNGHPENEEPEVEEAAEPSSS. Residues 108 to 249 are a coiled coil; sequence ASSEELEKAL…CDQLLNDVDV (142 aa).

The protein belongs to the TACC family. Interacts with zyg-9 to form a heterodimer. Interacts with zyg-8 to form a heterodimer. Interacts with efa-6 (via N-terminus). As to expression, expressed in touch neurons.

Its subcellular location is the cytoplasm. It localises to the cytoskeleton. It is found in the spindle pole. The protein resides in the microtubule organizing center. The protein localises to the centrosome. Its subcellular location is the chromosome. It localises to the centromere. It is found in the kinetochore. The protein resides in the cell projection. The protein localises to the axon. Its subcellular location is the perikaryon. Its function is as follows. Involved in microtubule formation, polymerization and assembly, regulating microtubule nucleation and length. Plays a role in pronuclear migration and mitotic and meiotic spindle elongation during early embryogenesis. In complex with zyg-9, functions during the early stages of embryonic development to regulate microtubule assembly throughout the cell cycle. Specifically, the complex is required for the formation and growth of astral microtubules and spindle microtubules during mitotic spindle assembly. At anaphase, the complex is required for mitotic spindle positioning in one-cell stage embryos. The complex acts in a partially redundant manner with the tac-1/zyg-8 complex to regulate microtubule assembly and processes during interphase, mitosis and meiosis in embryos. Plays a role in injury-induced axonal regrowth, regeneration and microtubule stability in PLM neurons and this may be downstream of efa-6. The polypeptide is Transforming acid coiled-coil-containing protein 1 (Caenorhabditis elegans).